Reading from the N-terminus, the 320-residue chain is MEAIRHDWTLEEIEDLLNTPLLELVHRAQTVHRDYQPANAIQLATLLSVKTGGCSENCAYCPQSAHYNTEVDPQSTLPIETVLEQAERAKAAGASRFCMGWAWREIRDGAQFDAMLEMVQGVRQLGLEACVTAGMLSDRQAERLAEAGLTAYNHNLDTSPEFYGEIISTRTYADRLATLERVRQAGISVCCGGIIGMGEGQRDRAGLLQVLATLNPHPESVPINALVPVEGTPLGDRDRLDPLDLVRMCAVARILMPKARVRLSAGRTALSREAQVLCFLAGANSIFYGDTLLTTANPVCEADRQLLADIGAEALEVVTA.

The 229-residue stretch at Asn39–Arg267 folds into the Radical SAM core domain. The [4Fe-4S] cluster site is built by Cys54, Cys58, and Cys61. [2Fe-2S] cluster is bound by residues Cys98, Cys130, Cys190, and Arg262.

This sequence belongs to the radical SAM superfamily. Biotin synthase family. In terms of assembly, homodimer. [4Fe-4S] cluster serves as cofactor. It depends on [2Fe-2S] cluster as a cofactor.

The enzyme catalyses (4R,5S)-dethiobiotin + (sulfur carrier)-SH + 2 reduced [2Fe-2S]-[ferredoxin] + 2 S-adenosyl-L-methionine = (sulfur carrier)-H + biotin + 2 5'-deoxyadenosine + 2 L-methionine + 2 oxidized [2Fe-2S]-[ferredoxin]. The protein operates within cofactor biosynthesis; biotin biosynthesis; biotin from 7,8-diaminononanoate: step 2/2. Functionally, catalyzes the conversion of dethiobiotin (DTB) to biotin by the insertion of a sulfur atom into dethiobiotin via a radical-based mechanism. This chain is Biotin synthase, found in Synechococcus elongatus (strain ATCC 33912 / PCC 7942 / FACHB-805) (Anacystis nidulans R2).